A 1054-amino-acid chain; its full sequence is MAAVKEPLEFHAKRPWRPEEAVEDPDEEDEDNTSEAENGFSLEEVLRLGGTKQDYLMLATLDENEEVIDGGKKGAIDDLQQGELEAFIQNLNLAKYTKASLVEEDEPAEKENSSKKEVKIPKINNKNTAESQRTSVNKVKNKNRPEPHSDENGSTTPKVKKDKQNIFEFFERQTLLLRPGGKWYDLEYSNEYSLKPQPQDVVSKYKTLAQKLYQHEINLFKSKTNSQKGASSTWMKAIVSSGTLGDRMAAMILLIQDDAVHTLQFVETLVNLVKKKGSKQQCLMALDTFKELLITDLLPDNRKLRIFSQRPFDKLEQLSSGNKDSRDRRLILWYFEHQLKHLVAEFVQVLETLSHDTLVTTKTRALTVAHELLCNKPEEEKALLVQVVNKLGDPQNRIATKASHLLETLLCKHPNMKGVVSGEVERLLFRSNISSKAQYYAICFLNQMALSHEESELANKLITVYFCFFRTCVKKKDVESKMLSALLTGVNRAYPYSQTGDDKVREQIDTLFKVLHIVNFNTSVQALMLLFQVMNSQQTISDRYYTALYRKMLDPGLMTCSKQAMFLNLVYKSLKADIVLRRVKAFVKRLLQVTCQQMPPFICGALYLVSEILKAKPGLRSQLDDHPESDDEENFIDANDDEDMEKFTDADKETEIVKKLETEETVPETDVETKKPEVASWVHFDNLKGGKQLNKYDPFSRNPLFCGAENTSLWELKKLSVHFHPSVALFAKTILQGNYIQYSGDPLQDFTLMRFLDRFVYRNPKPHKGKENTDSVVMQPKRKHFIKDIRHLPVNSKEFLAKEESQIPVDEVFFHRYYKKVAVKEKQKRDADEESIEDVDDEEFEELIDTFEDDNCFSSGKDDMDFAGNVKKRTKGAKDNTLDEDSEGSDDELGNLDDDEVSLGSMDDEEFAEVDEDGGTFMDVLDDESESVPELEVHSKVSTKKSKRKGTDDFDFAGSFQGPRKKKRNLNDSSLFVSAEEFGHLLDENMGSKFDNIGMNAMANKDNASLKQLRWEAERDDWLHNRDAKSIIKKKKHFKKKRIKTTQKTKKQRK.

The span at M1–E20 shows a compositional bias: basic and acidic residues. Disordered stretches follow at residues M1–L42 and V102–K160. Acidic residues predominate over residues A21–S34. Residues E109–I120 are compositionally biased toward basic and acidic residues. S113 is modified (phosphoserine). A compositionally biased stretch (polar residues) spans N124 to K138. Position 629 is a phosphoserine (S629). An N6-acetyllysine modification is found at K695. S835 is subject to Phosphoserine. Disordered regions lie at residues R873–S902 and D915–N969. Composition is skewed to acidic residues over residues L882–S902 and D915–P933. Phosphoserine occurs at positions 959, 973, and 978. The segment at I1031 to K1054 is disordered.

The protein belongs to the CBF/MAK21 family.

The protein localises to the nucleus. Stimulates transcription from the HSP70 promoter. The sequence is that of CCAAT/enhancer-binding protein zeta (CEBPZ) from Homo sapiens (Human).